The primary structure comprises 453 residues: Secreted triacylglycerol lipase LIP2 (453 aa).

The signal sequence occupies residues 1–19 (MKLSLVVLTLISVAAQALA). Asparagine 98 carries an N-linked (GlcNAc...) asparagine glycan. A disulfide bridge connects residues cysteine 115 and cysteine 284. Serine 197 acts as the Nucleophile in catalysis. Asparagine 230 is a glycosylation site (N-linked (GlcNAc...) asparagine). Catalysis depends on residues aspartate 344 and histidine 378. Cysteines 360 and 406 form a disulfide.

The protein belongs to the AB hydrolase superfamily. Lipase family. Class Lip subfamily.

Its subcellular location is the secreted. It catalyses the reaction a triacylglycerol + H2O = a diacylglycerol + a fatty acid + H(+). The catalysed reaction is a monoacylglycerol + H2O = glycerol + a fatty acid + H(+). The enzyme catalyses a diacylglycerol + H2O = a monoacylglycerol + a fatty acid + H(+). Its activity is regulated as follows. The activity is significantly increased in the presence of Triton X-100 and partially inhibited by PMSF but unaffected by univalent and divalent metal ions. Activity is significantly decreased in acetate buffer compared to that in citrate buffer at the same pH. Major secreted lipase involved in Dandruff and seborrheic dermatitis (D/SD) probably via lipase-mediated breakdown of sebaceous lipids and release of irritating free fatty acids. Has triacylglycerol lipase activity and is able to hydrolyze triolein, tristearin, trilinolein, tripalmitoylglycerol and trihexadecenoin. Hydrolyze diacylglycerols such as distearin, dilinolein, dipalmitoylglycerol and dipalmitolein. Shows high esterase activity against 4-nitrophenyl palmitate and 1-naphthyl palmitate but not 1-naphthyl acetate, suggesting that it specifically recognizes fatty acids. Mostly converts monoolein to di- and triolein, while free fatty acids are only produced in low amounts. This Malassezia globosa (strain ATCC MYA-4612 / CBS 7966) (Dandruff-associated fungus) protein is Secreted triacylglycerol lipase LIP2.